The primary structure comprises 160 residues: Small ribosomal subunit protein uS9 (160 aa).

This sequence belongs to the universal ribosomal protein uS9 family.

The polypeptide is Small ribosomal subunit protein uS9 (Bradyrhizobium sp. (strain ORS 278)).